Here is a 356-residue protein sequence, read N- to C-terminus: Tyrosine recombinase XerS (356 aa).

One can recognise a Core-binding (CB) domain in the interval 16–121 (TMPWYILEYY…ALSSLYKYLT (106 aa)). Residues 169 to 354 (EFLQYIDTEY…VNDEQKNALD (186 aa)) form the Tyr recombinase domain. Active-site residues include Arg-210, Lys-234, His-306, Arg-309, and His-332. The active-site O-(3'-phospho-DNA)-tyrosine intermediate is the Tyr-341.

It belongs to the 'phage' integrase family. XerS subfamily.

It localises to the cytoplasm. Its activity is regulated as follows. FtsK is required for recombination. In terms of biological role, site-specific tyrosine recombinase, which acts by catalyzing the cutting and rejoining of the recombining DNA molecules. Essential to convert dimers of the bacterial chromosome into monomers to permit their segregation at cell division. The protein is Tyrosine recombinase XerS of Streptococcus sanguinis (strain SK36).